Here is a 278-residue protein sequence, read N- to C-terminus: DegV domain-containing protein YejH (278 aa).

The 275-residue stretch at 3–277 folds into the DegV domain; it reads IKIVTDSSIT…PGAWAIMIDY (275 aa). The hexadecanoate site is built by threonine 60 and serine 92.

Functionally, may bind long-chain fatty acids, such as palmitate, and may play a role in lipid transport or fatty acid metabolism. The chain is DegV domain-containing protein YejH (yejH) from Lactococcus lactis subsp. lactis (strain IL1403) (Streptococcus lactis).